A 75-amino-acid chain; its full sequence is Translation initiation factor IF-1 (75 aa).

Positions 1 to 72 (MSKQDLIEME…TKGRITYRLK (72 aa)) constitute an S1-like domain.

Belongs to the IF-1 family. Component of the 30S ribosomal translation pre-initiation complex which assembles on the 30S ribosome in the order IF-2 and IF-3, IF-1 and N-formylmethionyl-tRNA(fMet); mRNA recruitment can occur at any time during PIC assembly.

Its subcellular location is the cytoplasm. In terms of biological role, one of the essential components for the initiation of protein synthesis. Stabilizes the binding of IF-2 and IF-3 on the 30S subunit to which N-formylmethionyl-tRNA(fMet) subsequently binds. Helps modulate mRNA selection, yielding the 30S pre-initiation complex (PIC). Upon addition of the 50S ribosomal subunit IF-1, IF-2 and IF-3 are released leaving the mature 70S translation initiation complex. In Synechocystis sp. (strain ATCC 27184 / PCC 6803 / Kazusa), this protein is Translation initiation factor IF-1.